The sequence spans 149 residues: SsrA-binding protein (149 aa).

The protein belongs to the SmpB family.

The protein resides in the cytoplasm. Required for rescue of stalled ribosomes mediated by trans-translation. Binds to transfer-messenger RNA (tmRNA), required for stable association of tmRNA with ribosomes. tmRNA and SmpB together mimic tRNA shape, replacing the anticodon stem-loop with SmpB. tmRNA is encoded by the ssrA gene; the 2 termini fold to resemble tRNA(Ala) and it encodes a 'tag peptide', a short internal open reading frame. During trans-translation Ala-aminoacylated tmRNA acts like a tRNA, entering the A-site of stalled ribosomes, displacing the stalled mRNA. The ribosome then switches to translate the ORF on the tmRNA; the nascent peptide is terminated with the 'tag peptide' encoded by the tmRNA and targeted for degradation. The ribosome is freed to recommence translation, which seems to be the essential function of trans-translation. This is SsrA-binding protein from Anaplasma phagocytophilum (strain HZ).